Consider the following 59-residue polypeptide: Large ribosomal subunit protein bL32 (59 aa).

Belongs to the bacterial ribosomal protein bL32 family.

This is Large ribosomal subunit protein bL32 from Mycoplasma capricolum subsp. capricolum (strain California kid / ATCC 27343 / NCTC 10154).